The following is a 168-amino-acid chain: Small ribosomal subunit protein uS9 (168 aa).

Residues 1 to 11 (MAQNEELTTEA) are compositionally biased toward low complexity. The interval 1-36 (MAQNEELTTEAVEAEENPTSYTSESSAAEAAPKKER) is disordered.

This sequence belongs to the universal ribosomal protein uS9 family.

The chain is Small ribosomal subunit protein uS9 from Pseudarthrobacter chlorophenolicus (strain ATCC 700700 / DSM 12829 / CIP 107037 / JCM 12360 / KCTC 9906 / NCIMB 13794 / A6) (Arthrobacter chlorophenolicus).